Consider the following 309-residue polypeptide: uncharacterized protein (309 aa).

The span at 1–16 shows a compositional bias: basic residues; that stretch reads MAGNSRRRGAVRKAGT. Positions 1-70 are disordered; that stretch reads MAGNSRRRGA…AKRTEETETV (70 aa). Residues G261, I281, and L290 each coordinate S-adenosyl-L-methionine.

Belongs to the class IV-like SAM-binding methyltransferase superfamily. RNA methyltransferase TrmH family.

This is an uncharacterized protein from Mycolicibacterium paratuberculosis (strain ATCC BAA-968 / K-10) (Mycobacterium paratuberculosis).